Here is a 428-residue protein sequence, read N- to C-terminus: 3-phosphoshikimate 1-carboxyvinyltransferase (428 aa).

3-phosphoshikimate-binding residues include K22, S23, and R27. K22 provides a ligand contact to phosphoenolpyruvate. Residues G98 and R126 each contribute to the phosphoenolpyruvate site. 3-phosphoshikimate is bound by residues S172, S173, Q174, S200, D316, N339, and K343. Q174 lines the phosphoenolpyruvate pocket. D316 (proton acceptor) is an active-site residue. Phosphoenolpyruvate contacts are provided by R347, R389, and K414.

The protein belongs to the EPSP synthase family. As to quaternary structure, monomer.

Its subcellular location is the cytoplasm. The enzyme catalyses 3-phosphoshikimate + phosphoenolpyruvate = 5-O-(1-carboxyvinyl)-3-phosphoshikimate + phosphate. It functions in the pathway metabolic intermediate biosynthesis; chorismate biosynthesis; chorismate from D-erythrose 4-phosphate and phosphoenolpyruvate: step 6/7. Catalyzes the transfer of the enolpyruvyl moiety of phosphoenolpyruvate (PEP) to the 5-hydroxyl of shikimate-3-phosphate (S3P) to produce enolpyruvyl shikimate-3-phosphate and inorganic phosphate. This is 3-phosphoshikimate 1-carboxyvinyltransferase from Psychromonas ingrahamii (strain DSM 17664 / CCUG 51855 / 37).